Here is a 277-residue protein sequence, read N- to C-terminus: Sulfur carrier protein FdhD (277 aa).

Cys-123 functions as the Cysteine persulfide intermediate in the catalytic mechanism.

This sequence belongs to the FdhD family.

It is found in the cytoplasm. Functionally, required for formate dehydrogenase (FDH) activity. Acts as a sulfur carrier protein that transfers sulfur from IscS to the molybdenum cofactor prior to its insertion into FDH. The sequence is that of Sulfur carrier protein FdhD from Pectobacterium atrosepticum (strain SCRI 1043 / ATCC BAA-672) (Erwinia carotovora subsp. atroseptica).